A 450-amino-acid chain; its full sequence is Sulfite exporter TauE/SafE family protein 1 (450 aa).

12 helical membrane-spanning segments follow: residues 5–25 (LVPL…SALA), 48–68 (TIEV…AASI), 70–90 (SAGG…IAGL), 97–117 (SFSA…NLFL), 130–150 (FDLA…GVIC), 153–173 (MFPN…STMK), 223–243 (FPWM…SINL), 261–281 (ALYW…TLCI), 316–336 (VMAL…GMLI), 340–360 (LLQI…MVLF), 378–398 (GTAA…LMVV), and 408–428 (ASII…LMTT).

It belongs to the 4-toluene sulfonate uptake permease (TSUP) (TC 2.A.102) family.

The protein resides in the membrane. The polypeptide is Sulfite exporter TauE/SafE family protein 1 (Arabidopsis thaliana (Mouse-ear cress)).